Consider the following 508-residue polypeptide: MSISRSLKIVATLYRYGLDDFLEGHSRLAFLHKLFGLCPVRRDTSAPLPQRVRLALESLGPIFVKFGQVLSTRRDLLPPEYADELALLQDRVPPFDGDIARQVVERSLGRKVEELFVDFDLKPVASASVAQVHKAWLRQPDGGRGREVAVKVLRPGILPVIEQDLSLMRTLAGWVEKLFADGKRLKPREVVAEFDKYLHDELDMMHEAANASQLRRNFKGSDMLIVPEVFYDYSSREVLTLEWMHGIPVGQIERLREAGVDLQKLSRFGVEIFFTQVFRHGFFHADMHPGNIFVAADGRYIALDFGIVGSLTDTDKHYLAVNFLAFFNRDYHRVATAHIESGWVPRDTRAEELEAAVRTVCEPIFEKPLSEISFGMVLLRLFETSRRFNVEIQPQLVLLQKTLLNIEGLGRQLDPELDLWDTAKPFLTKWMNEQIGWRGLLRTLKHEAPQWATTLPTLPRKLNEALGSAKTDLLVEGYIQLMREQKRQNFLLLLIAILLAALLAKSLL.

In terms of domain architecture, Protein kinase spans 118-494; that stretch reads DFDLKPVASA…QKRQNFLLLL (377 aa). Residues 124–132 and K151 each bind ATP; that span reads VASASVAQV. D286 acts as the Proton acceptor in catalysis. The chain crosses the membrane as a helical span at residues 488–508; it reads QNFLLLLIAILLAALLAKSLL.

Belongs to the ABC1 family. UbiB subfamily.

It localises to the cell inner membrane. It participates in cofactor biosynthesis; ubiquinone biosynthesis [regulation]. Functionally, is probably a protein kinase regulator of UbiI activity which is involved in aerobic coenzyme Q (ubiquinone) biosynthesis. This Chromobacterium violaceum (strain ATCC 12472 / DSM 30191 / JCM 1249 / CCUG 213 / NBRC 12614 / NCIMB 9131 / NCTC 9757 / MK) protein is Probable protein kinase UbiB.